We begin with the raw amino-acid sequence, 402 residues long: Hyaluronan and proteoglycan link protein 4 (402 aa).

An N-terminal signal peptide occupies residues 1-29 (MVCARAALGPGALWAAAWGVLLLTAPAGA). Residues 46 to 161 (SVVVQTAPGQ…DAGMVKLDLE (116 aa)) enclose the Ig-like C2-type domain. 5 disulfide bridges follow: cysteine 68–cysteine 143, cysteine 185–cysteine 266, cysteine 209–cysteine 230, cysteine 293–cysteine 363, and cysteine 318–cysteine 339. Residue asparagine 132 is glycosylated (N-linked (GlcNAc...) asparagine). Link domains lie at 163-268 (VVFP…FCFT) and 273-365 (GRVF…YCYR).

It belongs to the HAPLN family. In terms of tissue distribution, expressed predominantly in brain.

Its subcellular location is the secreted. The protein localises to the extracellular space. The protein resides in the extracellular matrix. Essential for the proper localization of brevican (BCAN), mainly as a perineuronal nets (PNNs)-type deposition in the brainstem and cerebellum thereby playing a key role in the formation and structural organization of PNNs. Contributes to the formation and transmission of inhibitory GABAergic synapses between Purkinje cells and deep cerebellar nuclei neurons. The sequence is that of Hyaluronan and proteoglycan link protein 4 (HAPLN4) from Homo sapiens (Human).